The sequence spans 288 residues: ATP synthase gamma chain (288 aa).

It belongs to the ATPase gamma chain family. As to quaternary structure, F-type ATPases have 2 components, CF(1) - the catalytic core - and CF(0) - the membrane proton channel. CF(1) has five subunits: alpha(3), beta(3), gamma(1), delta(1), epsilon(1). CF(0) has three main subunits: a, b and c.

It localises to the cell inner membrane. Its function is as follows. Produces ATP from ADP in the presence of a proton gradient across the membrane. The gamma chain is believed to be important in regulating ATPase activity and the flow of protons through the CF(0) complex. The sequence is that of ATP synthase gamma chain from Vesicomyosocius okutanii subsp. Calyptogena okutanii (strain HA).